The following is a 391-amino-acid chain: Recombination and repair protein (391 aa).

60–67 (GPSKSFKS) is an ATP binding site. A compositionally biased stretch (basic and acidic residues) spans 364-374 (KSPESKSKSAA). Residues 364 to 391 (KSPESKSKSAADLETDLEQLSDMEEFNE) form a disordered region. Over residues 376–391 (LETDLEQLSDMEEFNE) the composition is skewed to acidic residues.

This sequence belongs to the RecA family.

Important in genetic recombination, DNA repair, and replication. Possesses pairing and strand-transfer activity. Interacts with dda and gene 32 proteins. The polypeptide is Recombination and repair protein (UVSX) (Enterobacteria phage T4 (Bacteriophage T4)).